A 193-amino-acid polypeptide reads, in one-letter code: UMP-CMP kinase (193 aa).

Position 13–18 (13–18 (GAGKGT)) interacts with ATP. Residues 33–63 (SAGDLLRDERKKPDSQYGELIESYIRDGKIV) form an NMP region. Residues arginine 39, 61–63 (KIV), and 93–96 (GFPR) contribute to the a ribonucleoside 5'-phosphate site. Asparagine 100 is a CMP binding site. An LID region spans residues 133 to 143 (ERGKSSGRSDD). Arginine 134 contributes to the ATP binding site. Residues arginine 140 and arginine 151 each coordinate a ribonucleoside 5'-phosphate. Residue lysine 179 participates in ATP binding.

The protein belongs to the adenylate kinase family. UMP-CMP kinase subfamily. As to quaternary structure, monomer. The cofactor is Mg(2+).

Its subcellular location is the nucleus. The protein localises to the cytoplasm. It catalyses the reaction CMP + ATP = CDP + ADP. The catalysed reaction is dCMP + ATP = dCDP + ADP. It carries out the reaction UMP + ATP = UDP + ADP. The enzyme catalyses a 2'-deoxyribonucleoside 5'-diphosphate + ATP = a 2'-deoxyribonucleoside 5'-triphosphate + ADP. It catalyses the reaction a ribonucleoside 5'-diphosphate + ATP = a ribonucleoside 5'-triphosphate + ADP. In terms of biological role, catalyzes the phosphorylation of pyrimidine nucleoside monophosphates at the expense of ATP. Plays an important role in de novo pyrimidine nucleotide biosynthesis. Has preference for UMP and CMP as phosphate acceptors. Also displays broad nucleoside diphosphate kinase activity. This is UMP-CMP kinase (cmpk1) from Xenopus laevis (African clawed frog).